Here is a 328-residue protein sequence, read N- to C-terminus: Hairy/enhancer-of-split related with YRPW motif-like protein (328 aa).

Residues 1–54 (MKRPREPSGSDSESDGPIDVGREGELSQMARPLSTPSPSQMQARKKRRGIIEKR) form a disordered region. Positions 42 to 111 (QARKKRRGII…GGTGFFDARA (70 aa)) are transcriptional repression and interaction with NCOR1 and SIN3A. The bHLH domain occupies 43 to 98 (ARKKRRGIIEKRRRDRINSSLSELRRLVPTAFEKQGSSKLEKAEVLQMTVDHLKML). One can recognise an Orange domain in the interval 116–153 (FRSIGFRECLTEVIRYLGVLEGPSSRADPVRIRLLSHL). The tract at residues 236 to 272 (LLPSRGASSTRRARPLERPAAPLPAAPSGRATRGSHM) is disordered.

Belongs to the HEY family. In terms of assembly, self-associates. Interacts with GATA4, GATA6, HES1, HEY1 and HEY2. Interacts with HDAC1, NCOR1 and SIN3A.

It localises to the nucleus. Downstream effector of Notch signaling which may be required for cardiovascular development. Transcriptional repressor which binds preferentially to the canonical E box sequence 5'-CACGTG-3'. Represses transcription by the cardiac transcriptional activators GATA4 and GATA6. The polypeptide is Hairy/enhancer-of-split related with YRPW motif-like protein (HEYL) (Bos taurus (Bovine)).